The sequence spans 318 residues: HPr kinase/phosphorylase (318 aa).

Residues histidine 141 and lysine 162 contribute to the active site. 156–163 (GDSAMGKS) contacts ATP. Position 163 (serine 163) interacts with Mg(2+). Aspartate 180 functions as the Proton acceptor; for phosphorylation activity. Proton donor; for dephosphorylation activity in the catalytic mechanism. The important for the catalytic mechanism of both phosphorylation and dephosphorylation stretch occupies residues 204 to 213 (LEVRGLGILN). Glutamate 205 serves as a coordination point for Mg(2+). Arginine 248 is an active-site residue. An important for the catalytic mechanism of dephosphorylation region spans residues 269–274 (PVAAGR).

This sequence belongs to the HPrK/P family. As to quaternary structure, homohexamer. Mg(2+) is required as a cofactor.

The enzyme catalyses [HPr protein]-L-serine + ATP = [HPr protein]-O-phospho-L-serine + ADP + H(+). The catalysed reaction is [HPr protein]-O-phospho-L-serine + phosphate + H(+) = [HPr protein]-L-serine + diphosphate. Functionally, catalyzes the ATP- as well as the pyrophosphate-dependent phosphorylation of a specific serine residue in HPr, a phosphocarrier protein of the phosphoenolpyruvate-dependent sugar phosphotransferase system (PTS). HprK/P also catalyzes the pyrophosphate-producing, inorganic phosphate-dependent dephosphorylation (phosphorolysis) of seryl-phosphorylated HPr (P-Ser-HPr). The polypeptide is HPr kinase/phosphorylase (Chromobacterium violaceum (strain ATCC 12472 / DSM 30191 / JCM 1249 / CCUG 213 / NBRC 12614 / NCIMB 9131 / NCTC 9757 / MK)).